A 471-amino-acid chain; its full sequence is MTQFLPPNLLALFAPRDPVPYLPPLDKLPHEKHHNQPYCGIAPYIREFEDPRDAPPPTRAETREERMERKRREKIERRQQDVENELKIWDPHNDQNAQGDAFKTLFVARVNYDTTESKLRREFEVYGPIKRIHMVYNKRSGKPRGYAFIEYEHERDMHSAYKHADGKKIDGRRVLVDVERGRTVKGWRPRRLGGGLGGTRRGGADVNIRHSGRDDTSRYDERDRDRERERDRRERSRERDKERERRRSRSRERRRRSRSREKEERKRSRERSRDKDKDKDKDKDKEKDKDKDRDRKRRSRSRERKRERDRDREKKEDRVEGEVPESVDVPQDDAQTGDLGIDGIELKQEPEEKNRDRDRERDREKDRDKDRDRDRDRRRSHRDRERDKDRERDRDRRRDRDRDRDRDRDHKRERDRGDRGEKREERVPDNGMVMEQAEETSQDMYLDQESMQSGDGYLSTENGYMMEPPME.

The tract at residues 48–78 (FEDPRDAPPPTRAETREERMERKRREKIERR) is disordered. Basic and acidic residues predominate over residues 60 to 78 (AETREERMERKRREKIERR). The tract at residues 92 to 202 (HNDQNAQGDA…GGGLGGTRRG (111 aa)) is required for interaction with U1 RNA. The region spanning 103 to 184 (KTLFVARVNY…LVDVERGRTV (82 aa)) is the RRM domain. Positions 187–471 (WRPRRLGGGL…NGYMMEPPME (285 aa)) are disordered. Residues 192–201 (LGGGLGGTRR) are compositionally biased toward gly residues. The span at 207–245 (NIRHSGRDDTSRYDERDRDRERERDRRERSRERDKERER) shows a compositional bias: basic and acidic residues. Over residues 246-259 (RRSRSRERRRRSRS) the composition is skewed to basic residues. Residues 260-293 (REKEERKRSRERSRDKDKDKDKDKDKEKDKDKDR) show a composition bias toward basic and acidic residues. Positions 294 to 303 (DRKRRSRSRE) are enriched in basic residues. 2 stretches are compositionally biased toward basic and acidic residues: residues 304–321 (RKRE…RVEG) and 344–428 (IELK…ERVP).

Component of the U1 snRNP. The U1 snRNP is composed of the U1 snRNA and the 7 core Sm proteins snrpb, snrpd1, snrpd2, snrpd3, snrpe, snrpf and snrpg that assemble in a heptameric protein ring on the Sm site of the small nuclear RNA to form the core snRNP, and at least three U1 snRNP-specific proteins snrnp70/U1-70K, snrpa/U1-A and snrpc/U1-C.

It localises to the nucleus speckle. The protein localises to the nucleus. It is found in the nucleoplasm. Component of the spliceosomal U1 snRNP, which is essential for recognition of the pre-mRNA 5' splice-site and the subsequent assembly of the spliceosome. snrnp70 binds to the loop I region of U1-snRNA. This chain is U1 small nuclear ribonucleoprotein 70 kDa (snrnp70), found in Xenopus tropicalis (Western clawed frog).